Here is a 155-residue protein sequence, read N- to C-terminus: Small ribosomal subunit protein uS7c (155 aa).

This sequence belongs to the universal ribosomal protein uS7 family. Part of the 30S ribosomal subunit.

It localises to the plastid. The protein localises to the chloroplast. Functionally, one of the primary rRNA binding proteins, it binds directly to 16S rRNA where it nucleates assembly of the head domain of the 30S subunit. The polypeptide is Small ribosomal subunit protein uS7c (rps7) (Metasequoia glyptostroboides (Dawn redwood)).